The primary structure comprises 1340 residues: Protein SHORT ROOT IN SALT MEDIUM 1 (1340 aa).

6 disordered regions span residues 1–73 (MHRD…RSHL), 161–185 (YGEQ…ADPS), 357–473 (EEER…IRRS), 723–750 (TVEV…KKTV), 784–990 (PETT…PPRA), and 1063–1269 (RNQR…KREE). The segment covering 7–39 (SSRGTGYGQQQYGSQSGYSQNLGSGYPGSSVSG) has biased composition (low complexity). Polar residues predominate over residues 46–60 (QISLSSRHPSITGAP). Composition is skewed to basic and acidic residues over residues 173 to 182 (LQNEPTRRYA), 357 to 470 (EEER…EASI), and 723 to 735 (TVEV…KKSP). Residues 355–426 (LREEERRRED…RERKRALEIK (72 aa)) are a coiled coil. The span at 810-824 (GDTSDPSAKANEQTP) shows a compositional bias: polar residues. Basic residues predominate over residues 828–840 (IVKKKIIKRVAKR). Composition is skewed to basic and acidic residues over residues 841–872 (KVAE…KKSS), 887–988 (EDVK…EEPP), 1069–1097 (HQEE…DKEA), and 1105–1138 (PGKD…ETLG). Positions 1052 to 1086 (LKKLRVKIVRQRNQRKRHQEELSVKQNEAKSQDKR) form a coiled coil. A compositionally biased stretch (acidic residues) spans 1153–1204 (ENQDEEDDDGDDDPEEDPEEDPEEDPEEDPEEDPEECEEMDVANTEQEEPAE). Composition is skewed to basic and acidic residues over residues 1205 to 1214 (EPQKKEENLE) and 1229 to 1257 (TDNR…HGKQ). The EF-hand domain occupies 1270 to 1305 (TVDKELLQAFRFFDRNQAGYVRVEDMRVTIHSLGKF).

As to quaternary structure, interacts with BHLH148/RITF1. Expressed ubiquitously at high levels, including in guard cells.

The protein localises to the nucleus. Functionally, required for salt tolerance and sodium (Na) homeostasis after salt stress. Together with BHLH148/RITF1, regulates the transcription of several genes involved in the detoxification of reactive oxygen species (ROS) generated by salt (NaCl) stress. Binds calcium. In Arabidopsis thaliana (Mouse-ear cress), this protein is Protein SHORT ROOT IN SALT MEDIUM 1.